Reading from the N-terminus, the 1538-residue chain is Lysophospholipase nte1 (1538 aa).

Topologically, residues 1-74 are cytoplasmic; sequence MATDGGPLAA…PPPTPSTMAG (74 aa). A helical membrane pass occupies residues 75-95; that stretch reads WFGWVFSFFFQVIPSVLYWVI. The Lumenal portion of the chain corresponds to 96-117; the sequence is TFATITLPTWLFTLFSMSLTFT. A helical transmembrane segment spans residues 118–138; that stretch reads MNFTTLLLIALAIVSTISWFI. Residues 139–1538 lie on the Cytoplasmic side of the membrane; it reads RYRFLNMYSR…RTLAPRRASI (1400 aa). 3 disordered regions span residues 242–264, 302–393, and 529–559; these read KPNVDEGSNHMGAESSDEDDHRV, EGSS…KSVH, and AAQSKRPVSMASPEDISGDRESAGPSPGDLL. Low complexity predominate over residues 302-314; sequence EGSSSSASSVGPS. The span at 329–345 shows a compositional bias: basic and acidic residues; sequence GLEDSPRSNFVRDHGDS. Residues 692–811 and 856–976 each bind a nucleoside 3',5'-cyclic phosphate; these read GGTS…QGYV and RLTS…IAQR. The region spanning 1235-1399 is the PNPLA domain; the sequence is LVLGGGGARG…IDNLTVTHMK (165 aa). A GXGXXG motif is present at residues 1239-1244; the sequence is GGGARG. The GXSXG signature appears at 1266–1270; it reads GTSIG. Catalysis depends on S1268, which acts as the Nucleophile. Catalysis depends on D1386, which acts as the Proton acceptor. The DGA/G signature appears at 1386-1388; the sequence is DGG. The interval 1517 to 1538 is disordered; sequence LPEETEEKKKLQRTLAPRRASI.

It belongs to the NTE family.

Its subcellular location is the endoplasmic reticulum membrane. The enzyme catalyses a 1-acyl-sn-glycero-3-phosphocholine + H2O = sn-glycerol 3-phosphocholine + a fatty acid + H(+). Inhibited by organophosphorus esters. In terms of biological role, intracellular phospholipase B that catalyzes the double deacylation of phosphatidylcholine (PC) to glycerophosphocholine (GroPCho). Plays an important role in membrane lipid homeostasis. Responsible for the rapid PC turnover in response to inositol, elevated temperatures, or when choline is present in the growth medium. The sequence is that of Lysophospholipase nte1 (nte1) from Aspergillus oryzae (strain ATCC 42149 / RIB 40) (Yellow koji mold).